A 256-amino-acid chain; its full sequence is 1-(5-phosphoribosyl)-5-[(5-phosphoribosylamino)methylideneamino] imidazole-4-carboxamide isomerase (256 aa).

The Proton acceptor role is filled by Asp8. Asp129 functions as the Proton donor in the catalytic mechanism.

The protein belongs to the HisA/HisF family.

It is found in the cytoplasm. The enzyme catalyses 1-(5-phospho-beta-D-ribosyl)-5-[(5-phospho-beta-D-ribosylamino)methylideneamino]imidazole-4-carboxamide = 5-[(5-phospho-1-deoxy-D-ribulos-1-ylimino)methylamino]-1-(5-phospho-beta-D-ribosyl)imidazole-4-carboxamide. The protein operates within amino-acid biosynthesis; L-histidine biosynthesis; L-histidine from 5-phospho-alpha-D-ribose 1-diphosphate: step 4/9. This Prochlorococcus marinus (strain NATL2A) protein is 1-(5-phosphoribosyl)-5-[(5-phosphoribosylamino)methylideneamino] imidazole-4-carboxamide isomerase.